Consider the following 292-residue polypeptide: Phosphoribosylaminoimidazole-succinocarboxamide synthase (292 aa).

It belongs to the SAICAR synthetase family.

It catalyses the reaction 5-amino-1-(5-phospho-D-ribosyl)imidazole-4-carboxylate + L-aspartate + ATP = (2S)-2-[5-amino-1-(5-phospho-beta-D-ribosyl)imidazole-4-carboxamido]succinate + ADP + phosphate + 2 H(+). It participates in purine metabolism; IMP biosynthesis via de novo pathway; 5-amino-1-(5-phospho-D-ribosyl)imidazole-4-carboxamide from 5-amino-1-(5-phospho-D-ribosyl)imidazole-4-carboxylate: step 1/2. The polypeptide is Phosphoribosylaminoimidazole-succinocarboxamide synthase (Elusimicrobium minutum (strain Pei191)).